The primary structure comprises 142 residues: Large ribosomal subunit protein uL13 (142 aa).

The protein belongs to the universal ribosomal protein uL13 family. As to quaternary structure, part of the 50S ribosomal subunit.

Its function is as follows. This protein is one of the early assembly proteins of the 50S ribosomal subunit, although it is not seen to bind rRNA by itself. It is important during the early stages of 50S assembly. This chain is Large ribosomal subunit protein uL13, found in Dictyoglomus thermophilum (strain ATCC 35947 / DSM 3960 / H-6-12).